The chain runs to 1223 residues: DNA-directed RNA polymerase subunit beta'' (1223 aa).

Residues C233, C307, C314, and C317 each contribute to the Zn(2+) site.

Belongs to the RNA polymerase beta' chain family. RpoC2 subfamily. As to quaternary structure, in plastids the minimal PEP RNA polymerase catalytic core is composed of four subunits: alpha, beta, beta', and beta''. When a (nuclear-encoded) sigma factor is associated with the core the holoenzyme is formed, which can initiate transcription. The cofactor is Zn(2+).

The protein localises to the plastid. It is found in the chloroplast. It catalyses the reaction RNA(n) + a ribonucleoside 5'-triphosphate = RNA(n+1) + diphosphate. Functionally, DNA-dependent RNA polymerase catalyzes the transcription of DNA into RNA using the four ribonucleoside triphosphates as substrates. The protein is DNA-directed RNA polymerase subunit beta'' of Mesostigma viride (Green alga).